The sequence spans 414 residues: S-adenosylmethionine synthase (414 aa).

Position 11 (histidine 11) interacts with ATP. Aspartate 13 is a binding site for Mg(2+). Residue glutamate 39 coordinates K(+). L-methionine-binding residues include glutamate 52 and glutamine 95. The tract at residues 95–105 (QSPDIAQGVNM) is flexible loop. Residues 169 to 171 (DGK), 245 to 246 (KF), aspartate 254, 260 to 261 (RK), alanine 277, and lysine 281 each bind ATP. Aspartate 254 contributes to the L-methionine binding site. L-methionine is bound at residue lysine 285.

Belongs to the AdoMet synthase family. As to quaternary structure, homotetramer; dimer of dimers. Mg(2+) serves as cofactor. The cofactor is K(+).

Its subcellular location is the cytoplasm. The catalysed reaction is L-methionine + ATP + H2O = S-adenosyl-L-methionine + phosphate + diphosphate. It functions in the pathway amino-acid biosynthesis; S-adenosyl-L-methionine biosynthesis; S-adenosyl-L-methionine from L-methionine: step 1/1. Functionally, catalyzes the formation of S-adenosylmethionine (AdoMet) from methionine and ATP. The overall synthetic reaction is composed of two sequential steps, AdoMet formation and the subsequent tripolyphosphate hydrolysis which occurs prior to release of AdoMet from the enzyme. The chain is S-adenosylmethionine synthase from Synechococcus sp. (strain JA-2-3B'a(2-13)) (Cyanobacteria bacterium Yellowstone B-Prime).